The sequence spans 289 residues: Pantothenate synthetase (289 aa).

28-35 (MGCLHEGH) serves as a coordination point for ATP. The Proton donor role is filled by H35. Q59 serves as a coordination point for (R)-pantoate. Residue Q59 participates in beta-alanine binding. An ATP-binding site is contributed by 147 to 150 (GLKD). Q153 serves as a coordination point for (R)-pantoate. Residues V176 and 184-187 (MSSR) each bind ATP.

Belongs to the pantothenate synthetase family. Homodimer.

Its subcellular location is the cytoplasm. The enzyme catalyses (R)-pantoate + beta-alanine + ATP = (R)-pantothenate + AMP + diphosphate + H(+). It participates in cofactor biosynthesis; (R)-pantothenate biosynthesis; (R)-pantothenate from (R)-pantoate and beta-alanine: step 1/1. Functionally, catalyzes the condensation of pantoate with beta-alanine in an ATP-dependent reaction via a pantoyl-adenylate intermediate. This is Pantothenate synthetase from Magnetococcus marinus (strain ATCC BAA-1437 / JCM 17883 / MC-1).